Consider the following 118-residue polypeptide: Large ribosomal subunit protein bL20 (118 aa).

Belongs to the bacterial ribosomal protein bL20 family.

Its function is as follows. Binds directly to 23S ribosomal RNA and is necessary for the in vitro assembly process of the 50S ribosomal subunit. It is not involved in the protein synthesizing functions of that subunit. This chain is Large ribosomal subunit protein bL20, found in Tolumonas auensis (strain DSM 9187 / NBRC 110442 / TA 4).